The chain runs to 156 residues: Transcription inhibitor protein Gfh1 (156 aa).

A coiled-coil region spans residues 1–74; sequence MAREVKLTKA…LEDILSRAVI (74 aa).

The protein belongs to the GreA/GreB family. Interacts with RNAP.

Inhibits all catalytic activities of RNA polymerase (RNAP) by partially occluding its substrate-binding site and preventing NTP binding. The polypeptide is Transcription inhibitor protein Gfh1 (gfh1) (Thermus thermophilus (strain ATCC BAA-163 / DSM 7039 / HB27)).